The chain runs to 171 residues: Protein phosphatase 1 regulatory subunit 1A (171 aa).

The residue at position 1 (Met-1) is an N-acetylmethionine. A disordered region spans residues 1–171; sequence MEQDNSPRKI…PLDSKGANSV (171 aa). The interval 9 to 12 is essential for activity; sequence KIQF. Over residues 19–29 the composition is skewed to basic and acidic residues; it reads PHLDPEAAEQI. Phosphothreonine; by PKA is present on Thr-35. Residues 42 to 54 form an essential for activity region; it reads TSDQSSPEIDEDR. Phosphoserine is present on residues Ser-43, Ser-46, Ser-47, and Ser-67. A compositionally biased stretch (basic and acidic residues) spans 135–157; sequence KTAECIPKTHERGSKEPSTKEPS. The segment at 143-171 is interaction with PPP1R15A; sequence THERGSKEPSTKEPSTHIPPLDSKGANSV.

Belongs to the protein phosphatase inhibitor 1 family. As to quaternary structure, interacts with PPP1R15A. Phosphorylation of Thr-35 is required for activity.

Its function is as follows. Inhibitor of protein-phosphatase 1. This protein may be important in hormonal control of glycogen metabolism. Hormones that elevate intracellular cAMP increase I-1 activity in many tissues. I-1 activation may impose cAMP control over proteins that are not directly phosphorylated by PKA. Following a rise in intracellular calcium, I-1 is inactivated by calcineurin (or PP2B). Does not inhibit type-2 phosphatases. The sequence is that of Protein phosphatase 1 regulatory subunit 1A (PPP1R1A) from Homo sapiens (Human).